The chain runs to 292 residues: Mycothiol acetyltransferase (292 aa).

N-acetyltransferase domains are found at residues 2–138 (AEVV…PSAP) and 141–292 (VTVR…YAHS). A 1D-myo-inositol 2-(L-cysteinylamino)-2-deoxy-alpha-D-glucopyranoside-binding site is contributed by glutamate 33. Position 68 to 70 (68 to 70 (AVV)) interacts with acetyl-CoA. Positions 168, 215, and 225 each coordinate 1D-myo-inositol 2-(L-cysteinylamino)-2-deoxy-alpha-D-glucopyranoside. Residues 229–231 (VAV) and 236–242 (QGRGLGR) each bind acetyl-CoA. Tyrosine 263 serves as a coordination point for 1D-myo-inositol 2-(L-cysteinylamino)-2-deoxy-alpha-D-glucopyranoside. Acetyl-CoA is bound at residue 268–273 (NAAALH).

The protein belongs to the acetyltransferase family. MshD subfamily. In terms of assembly, monomer.

It catalyses the reaction 1D-myo-inositol 2-(L-cysteinylamino)-2-deoxy-alpha-D-glucopyranoside + acetyl-CoA = mycothiol + CoA + H(+). In terms of biological role, catalyzes the transfer of acetyl from acetyl-CoA to desacetylmycothiol (Cys-GlcN-Ins) to form mycothiol. This is Mycothiol acetyltransferase from Tsukamurella paurometabola (strain ATCC 8368 / DSM 20162 / CCUG 35730 / CIP 100753 / JCM 10117 / KCTC 9821 / NBRC 16120 / NCIMB 702349 / NCTC 13040) (Corynebacterium paurometabolum).